We begin with the raw amino-acid sequence, 355 residues long: Glucose-1-phosphate thymidylyltransferase (355 aa).

Mg(2+) contacts are provided by Asp-107 and Asp-220.

Belongs to the glucose-1-phosphate thymidylyltransferase family. Mg(2+) serves as cofactor.

The enzyme catalyses dTTP + alpha-D-glucose 1-phosphate + H(+) = dTDP-alpha-D-glucose + diphosphate. It participates in antibiotic biosynthesis; streptomycin biosynthesis. In terms of biological role, involved in the biosynthesis of the streptose moiety of streptomycin. Catalyzes the formation of dTDP-glucose, from dTTP and glucose 1-phosphate, as well as its pyrophosphorolysis. This chain is Glucose-1-phosphate thymidylyltransferase (strD), found in Streptomyces griseus.